The primary structure comprises 318 residues: Gamma-glutamyl hydrolase (318 aa).

The signal sequence occupies residues 1 to 24 (MASPGCLLCVLGLLLCGAASLELS). Residues 25 to 318 (RPHGDTAKKP…SSFQQCYIFD (294 aa)) form the Gamma-glutamyl hydrolase domain. Asparagine 116 carries N-linked (GlcNAc...) asparagine glycosylation. Cysteine 134 serves as the catalytic Nucleophile. N-linked (GlcNAc...) asparagine glycosylation is found at asparagine 163 and asparagine 203. Catalysis depends on histidine 244, which acts as the Proton donor. Residue asparagine 307 is glycosylated (N-linked (GlcNAc...) asparagine; partial).

Belongs to the peptidase C26 family. As to quaternary structure, homodimer.

It is found in the secreted. The protein localises to the extracellular space. It localises to the lysosome. The protein resides in the melanosome. The enzyme catalyses (6S)-5,6,7,8-tetrahydrofolyl-(gamma-L-Glu)(n) + (n-1) H2O = (6S)-5,6,7,8-tetrahydrofolate + (n-1) L-glutamate. In terms of biological role, hydrolyzes the polyglutamate sidechains of pteroylpolyglutamates. Progressively removes gamma-glutamyl residues from pteroylpoly-gamma-glutamate to yield pteroyl-alpha-glutamate (folic acid) and free glutamate. May play an important role in the bioavailability of dietary pteroylpolyglutamates and in the metabolism of pteroylpolyglutamates and antifolates. This is Gamma-glutamyl hydrolase from Homo sapiens (Human).